Reading from the N-terminus, the 482-residue chain is 3-isopropylmalate dehydratase large subunit (482 aa).

The interval 60-79 is disordered; that stretch reads ATPDHNVPTTRAERQGGLES. Positions 353, 414, and 417 each coordinate [4Fe-4S] cluster.

Belongs to the aconitase/IPM isomerase family. LeuC type 1 subfamily. As to quaternary structure, heterodimer of LeuC and LeuD. [4Fe-4S] cluster is required as a cofactor.

It catalyses the reaction (2R,3S)-3-isopropylmalate = (2S)-2-isopropylmalate. The protein operates within amino-acid biosynthesis; L-leucine biosynthesis; L-leucine from 3-methyl-2-oxobutanoate: step 2/4. Catalyzes the isomerization between 2-isopropylmalate and 3-isopropylmalate, via the formation of 2-isopropylmaleate. This is 3-isopropylmalate dehydratase large subunit from Xanthomonas euvesicatoria pv. vesicatoria (strain 85-10) (Xanthomonas campestris pv. vesicatoria).